A 389-amino-acid polypeptide reads, in one-letter code: Succinate--CoA ligase [ADP-forming] subunit beta (389 aa).

The ATP-grasp domain maps to 9–244 (KEILRKYNVP…LDEEDANEIE (236 aa)). ATP contacts are provided by residues Lys46, 53-55 (GRG), Glu99, Ala102, and Glu107. Mg(2+)-binding residues include Asn199 and Asp213. Residues Asn264 and 321–323 (GIM) contribute to the substrate site.

The protein belongs to the succinate/malate CoA ligase beta subunit family. Heterotetramer of two alpha and two beta subunits. Mg(2+) is required as a cofactor.

The catalysed reaction is succinate + ATP + CoA = succinyl-CoA + ADP + phosphate. The enzyme catalyses GTP + succinate + CoA = succinyl-CoA + GDP + phosphate. It functions in the pathway carbohydrate metabolism; tricarboxylic acid cycle; succinate from succinyl-CoA (ligase route): step 1/1. Its function is as follows. Succinyl-CoA synthetase functions in the citric acid cycle (TCA), coupling the hydrolysis of succinyl-CoA to the synthesis of either ATP or GTP and thus represents the only step of substrate-level phosphorylation in the TCA. The beta subunit provides nucleotide specificity of the enzyme and binds the substrate succinate, while the binding sites for coenzyme A and phosphate are found in the alpha subunit. The polypeptide is Succinate--CoA ligase [ADP-forming] subunit beta (Cupriavidus pinatubonensis (strain JMP 134 / LMG 1197) (Cupriavidus necator (strain JMP 134))).